An 82-amino-acid chain; its full sequence is Large ribosomal subunit protein bL31B (82 aa).

This sequence belongs to the bacterial ribosomal protein bL31 family. Type B subfamily. In terms of assembly, part of the 50S ribosomal subunit.

In Acinetobacter baylyi (strain ATCC 33305 / BD413 / ADP1), this protein is Large ribosomal subunit protein bL31B.